The chain runs to 720 residues: Cyclic nucleotide-gated ion channel 17 (720 aa).

Topologically, residues 1 to 85 are cytoplasmic; it reads MELRKDKLLM…SEIVLKWNWV (85 aa). The chain crosses the membrane as a helical span at residues 86–106; that stretch reads FIVSCMVALFIDPLYFFVPAI. Over 107-121 the chain is Extracellular; the sequence is GGDKNYPCARTDTSL. A helical transmembrane segment spans residues 122–142; the sequence is SILVTFFRTIADLFYLLHIFI. Over 143–178 the chain is Cytoplasmic; it reads KFRTGFIAPNSSTRVFGRGELVMDPKAIAWRYIKSD. Residues 179–199 form a helical membrane-spanning segment; sequence FIIDLIATLPLPQIVIWFVIS. The Extracellular portion of the chain corresponds to 200 to 211; that stretch reads TTKSYRFDHNNN. A helical transmembrane segment spans residues 212 to 232; that stretch reads AIALIVLLQYIPRFYLIIPLS. Residues 233–252 lie on the Cytoplasmic side of the membrane; the sequence is SQIVKATGVVTKTAWAGAAY. The helical transmembrane segment at 253–273 threads the bilayer; the sequence is NLLLYMLASHVLGAAWYILSV. The Extracellular portion of the chain corresponds to 274–377; it reads DRYTSCWKSR…LSTTMFMGET (104 aa). Residues 378-398 form a helical membrane-spanning segment; it reads TFAVLIAIFGLVLFAHLIGNM. The Cytoplasmic portion of the chain corresponds to 399–720; the sequence is QTYLQSLTVR…EPDFSAEHDD (322 aa). A nucleoside 3',5'-cyclic phosphate is bound by residues 481–605 and Glu-552; that span reads FFSQ…SKKL. The segment at 597-612 is calmodulin-binding; sequence FRRLHSKKLQHTFRFY. Positions 617-646 constitute an IQ domain; it reads RTWAACFIQAAWRRYKRRVMENNLTAIESM.

It belongs to the cyclic nucleotide-gated cation channel (TC 1.A.1.5) family. As to quaternary structure, homotetramer or heterotetramer. Part of a functional complex containing PSKR1, BAK1, CNGC17, and AHA. Interacts with AHA1, AHA2, and BAK1, but not with PSKR1 or BRI1.

The protein resides in the cell membrane. In terms of biological role, probable cyclic nucleotide-gated ion channel. Forms a functional cation-translocating unit with AHAs that is activated by PSKR1/BAK1 and possibly other BAK1/RLK complexes. Required for PSK-induced protoplast expansion. The chain is Cyclic nucleotide-gated ion channel 17 from Arabidopsis thaliana (Mouse-ear cress).